The following is a 245-amino-acid chain: Probable phosphatase PC1_1798 (245 aa).

Zn(2+) is bound by residues His-7, His-9, His-15, His-40, Glu-73, His-101, His-131, Asp-192, and His-194.

It belongs to the PHP family. As to quaternary structure, homotrimer. The cofactor is Zn(2+).

The sequence is that of Probable phosphatase PC1_1798 from Pectobacterium carotovorum subsp. carotovorum (strain PC1).